Consider the following 207-residue polypeptide: 2,3-bisphosphoglycerate-dependent phosphoglycerate mutase (207 aa).

Substrate contacts are provided by residues 10 to 17 (RHGQSEWN), 23 to 24 (TG), Arg-62, 89 to 92 (ERDY), Lys-100, 116 to 117 (RR), and 160 to 161 (GN). The Tele-phosphohistidine intermediate role is filled by His-11. Catalysis depends on Glu-89, which acts as the Proton donor/acceptor.

It belongs to the phosphoglycerate mutase family. BPG-dependent PGAM subfamily. Homodimer.

The enzyme catalyses (2R)-2-phosphoglycerate = (2R)-3-phosphoglycerate. Its pathway is carbohydrate degradation; glycolysis; pyruvate from D-glyceraldehyde 3-phosphate: step 3/5. Catalyzes the interconversion of 2-phosphoglycerate and 3-phosphoglycerate. The chain is 2,3-bisphosphoglycerate-dependent phosphoglycerate mutase from Bradyrhizobium diazoefficiens (strain JCM 10833 / BCRC 13528 / IAM 13628 / NBRC 14792 / USDA 110).